Here is a 577-residue protein sequence, read N- to C-terminus: Arginine--tRNA ligase (577 aa).

Residues 122-132 (PNVAKEMHVGH) carry the 'HIGH' region motif.

This sequence belongs to the class-I aminoacyl-tRNA synthetase family. As to quaternary structure, monomer.

It localises to the cytoplasm. The enzyme catalyses tRNA(Arg) + L-arginine + ATP = L-arginyl-tRNA(Arg) + AMP + diphosphate. The chain is Arginine--tRNA ligase from Vibrio vulnificus (strain YJ016).